The primary structure comprises 424 residues: Adenylosuccinate synthetase (424 aa).

GTP is bound by residues 12–18 (GDEGKGK) and 40–42 (GHT). D13 serves as the catalytic Proton acceptor. Positions 13 and 40 each coordinate Mg(2+). Residues 13-16 (DEGK), 38-41 (NAGH), T130, R144, N220, T235, and R299 each bind IMP. Catalysis depends on H41, which acts as the Proton donor. Position 295–301 (295–301 (VTTGRKR)) interacts with substrate. Residues R301, 327-329 (KLD), and 412-414 (GTG) each bind GTP.

The protein belongs to the adenylosuccinate synthetase family. As to quaternary structure, homodimer. It depends on Mg(2+) as a cofactor.

It localises to the cytoplasm. It carries out the reaction IMP + L-aspartate + GTP = N(6)-(1,2-dicarboxyethyl)-AMP + GDP + phosphate + 2 H(+). Its pathway is purine metabolism; AMP biosynthesis via de novo pathway; AMP from IMP: step 1/2. Functionally, plays an important role in the de novo pathway and in the salvage pathway of purine nucleotide biosynthesis. Catalyzes the first committed step in the biosynthesis of AMP from IMP. The sequence is that of Adenylosuccinate synthetase (adB) from Emericella nidulans (strain FGSC A4 / ATCC 38163 / CBS 112.46 / NRRL 194 / M139) (Aspergillus nidulans).